The sequence spans 146 residues: Hemoglobin subunit beta/beta' (146 aa).

A Globin domain is found at 2–146; the sequence is HWSAEEKQLI…VAHALARKYH (145 aa). Histidine 63 and histidine 92 together coordinate heme b.

The protein belongs to the globin family. In terms of assembly, heterotetramer of two alpha chains and two beta chains. In terms of tissue distribution, red blood cells.

Functionally, involved in oxygen transport from the lung to the various peripheral tissues. The chain is Hemoglobin subunit beta/beta' (HBB) from Chroicocephalus ridibundus (Black-headed gull).